The following is a 511-amino-acid chain: UDP-N-acetylhexosamine pyrophosphorylase-like protein 1 (511 aa).

The span at 1-19 (MDRSESAESAESRRRRAEE) shows a compositional bias: basic and acidic residues. Positions 1–22 (MDRSESAESAESRRRRAEESGQ) are disordered. Positions 117 to 120 (LAGG) match the Substrate binding motif. UTP-binding positions include 117-120 (LAGG), Lys-131, Gln-205, and Gly-231. Asn-232 contacts substrate. Residue Asp-262 coordinates UTP. A Substrate binding motif is present at residues 312–313 (EY). Lys-386 lines the UTP pocket. Substrate is bound at residue Lys-416.

Belongs to the UDPGP type 1 family.

This chain is UDP-N-acetylhexosamine pyrophosphorylase-like protein 1 (uap1l1), found in Xenopus tropicalis (Western clawed frog).